We begin with the raw amino-acid sequence, 195 residues long: Ribonuclease HII (195 aa).

The region spanning 8-195 is the RNase H type-2 domain; it reads WGVVGVDEAG…FAPVRRLLGG (188 aa). Positions 14, 15, and 106 each coordinate a divalent metal cation.

Belongs to the RNase HII family. It depends on Mn(2+) as a cofactor. Mg(2+) serves as cofactor.

It localises to the cytoplasm. The enzyme catalyses Endonucleolytic cleavage to 5'-phosphomonoester.. Functionally, endonuclease that specifically degrades the RNA of RNA-DNA hybrids. This Halorhodospira halophila (strain DSM 244 / SL1) (Ectothiorhodospira halophila (strain DSM 244 / SL1)) protein is Ribonuclease HII.